A 1128-amino-acid chain; its full sequence is Nck-associated protein 1 (1128 aa).

An N-acetylserine modification is found at Ser-2. A disordered region spans residues Ala-640 to Met-665. A compositionally biased stretch (basic and acidic residues) spans Lys-651–Met-665. The chain crosses the membrane as a helical span at residues Ile-995–Met-1015.

It belongs to the HEM-1/HEM-2 family. In terms of assembly, component of the WAVE1 complex composed of ABI2, CYFIP1 or CYFIP2, BRK1, NCKAP1 and WASF1/WAVE1. Within the complex, a heterodimer containing NCKAP1 and CYFIP1 interacts with a heterotrimer formed by WAVE1, ABI2 and BRK1. Component of the WAVE2 complex composed of ABI1, CYFIP1/SRA1, NCKAP1/NAP1 and WASF2/WAVE2. CYFIP2 binds to activated RAC1 which causes the complex to dissociate, releasing activated WASF1. The complex can also be activated by NCK1. Associates preferentially with the first SH3 domain of NCK. Interacts with NYAP1, NYAP2 and MYO16. Interacts with TMEM132D. As to quaternary structure, (Microbial infection) Interacts with human cytomegalovirus protein UL135. As to expression, expressed in all tissues examined except peripheral blood leukocytes, with highest expression in brain, heart, and skeletal muscle. Expressed in cells of various brain regions including Purkinje cells and dentate nucleus of the cerebellum, CA4 region and dentate gyrus of the hippocampus, and in frontal gray and white matter.

It is found in the cell membrane. The protein localises to the cell projection. Its subcellular location is the lamellipodium membrane. In terms of biological role, part of the WAVE complex that regulates lamellipodia formation. The WAVE complex regulates actin filament reorganization via its interaction with the Arp2/3 complex. Actin remodeling activity is regulated by RAC1. As component of the WAVE1 complex, required for BDNF-NTRK2 endocytic trafficking and signaling from early endosomes. The polypeptide is Nck-associated protein 1 (NCKAP1) (Homo sapiens (Human)).